The chain runs to 333 residues: Flagellar P-ring protein (333 aa).

The signal sequence occupies residues 1-22 (MRRNILSMFLFITLIIYSSIFA).

This sequence belongs to the FlgI family. The basal body constitutes a major portion of the flagellar organelle and consists of four rings (L,P,S, and M) mounted on a central rod.

It localises to the periplasm. Its subcellular location is the bacterial flagellum basal body. Functionally, assembles around the rod to form the L-ring and probably protects the motor/basal body from shearing forces during rotation. This is Flagellar P-ring protein from Fervidobacterium nodosum (strain ATCC 35602 / DSM 5306 / Rt17-B1).